The sequence spans 250 residues: Sugar fermentation stimulation protein homolog (250 aa).

The protein belongs to the SfsA family.

This is Sugar fermentation stimulation protein homolog from Synechococcus sp. (strain CC9311).